The sequence spans 191 residues: Orotate phosphoribosyltransferase (191 aa).

114-122 (EDVVTTGKS) lines the 5-phospho-alpha-D-ribose 1-diphosphate pocket. Positions 118 and 146 each coordinate orotate.

It belongs to the purine/pyrimidine phosphoribosyltransferase family. PyrE subfamily. As to quaternary structure, homodimer. It depends on Mg(2+) as a cofactor.

It carries out the reaction orotidine 5'-phosphate + diphosphate = orotate + 5-phospho-alpha-D-ribose 1-diphosphate. It participates in pyrimidine metabolism; UMP biosynthesis via de novo pathway; UMP from orotate: step 1/2. Functionally, catalyzes the transfer of a ribosyl phosphate group from 5-phosphoribose 1-diphosphate to orotate, leading to the formation of orotidine monophosphate (OMP). The chain is Orotate phosphoribosyltransferase from Clostridium botulinum (strain Langeland / NCTC 10281 / Type F).